The chain runs to 400 residues: GTPase Obg (400 aa).

Residues 1-159 enclose the Obg domain; that stretch reads MKFVDEVQIR…RTLKLELLLL (159 aa). An OBG-type G domain is found at 160–333; that stretch reads ADVGMLGLPN…VCYDILDLLD (174 aa). Residues 166–173, 191–195, 213–216, 283–286, and 314–316 each bind GTP; these read GLPNAGKS, FTTLV, DIPG, NKMD, and SAI. Mg(2+)-binding residues include Ser-173 and Thr-193.

The protein belongs to the TRAFAC class OBG-HflX-like GTPase superfamily. OBG GTPase family. In terms of assembly, monomer. It depends on Mg(2+) as a cofactor.

The protein localises to the cytoplasm. An essential GTPase which binds GTP, GDP and possibly (p)ppGpp with moderate affinity, with high nucleotide exchange rates and a fairly low GTP hydrolysis rate. Plays a role in control of the cell cycle, stress response, ribosome biogenesis and in those bacteria that undergo differentiation, in morphogenesis control. The polypeptide is GTPase Obg (Aeromonas salmonicida (strain A449)).